A 213-amino-acid chain; its full sequence is Orotate phosphoribosyltransferase (213 aa).

Position 26 (K26) interacts with 5-phospho-alpha-D-ribose 1-diphosphate. 34-35 (FF) lines the orotate pocket. Residues 72–73 (YK), R99, K100, K103, H105, and 124–132 (DDVITAGTA) each bind 5-phospho-alpha-D-ribose 1-diphosphate. Orotate contacts are provided by T128 and R156.

The protein belongs to the purine/pyrimidine phosphoribosyltransferase family. PyrE subfamily. In terms of assembly, homodimer. It depends on Mg(2+) as a cofactor.

The enzyme catalyses orotidine 5'-phosphate + diphosphate = orotate + 5-phospho-alpha-D-ribose 1-diphosphate. It functions in the pathway pyrimidine metabolism; UMP biosynthesis via de novo pathway; UMP from orotate: step 1/2. Catalyzes the transfer of a ribosyl phosphate group from 5-phosphoribose 1-diphosphate to orotate, leading to the formation of orotidine monophosphate (OMP). This chain is Orotate phosphoribosyltransferase, found in Vibrio parahaemolyticus serotype O3:K6 (strain RIMD 2210633).